The primary structure comprises 402 residues: NAD-dependent protein deacetylase sirtuin-7 (402 aa).

Disordered regions lie at residues 1 to 25 and 59 to 78; these read MAAG…REEQ and VTEL…RQEE. The segment covering 9–25 has biased composition (basic and acidic residues); the sequence is RSERKAAERVRRLREEQ. A Deacetylase sirtuin-type domain is found at 83 to 330; it reads PEELRRKVRE…RLLMDELGLE (248 aa). NAD(+) contacts are provided by residues 108–127 and 168–171; these read GAGI…NGVW and QNCD. Histidine 188 (proton acceptor) is an active-site residue. The Zn(2+) site is built by cysteine 196, cysteine 199, cysteine 226, and cysteine 229. NAD(+) contacts are provided by residues 269–271, 298–300, and cysteine 316; these read GSS and NLQ. The interval 355–385 is disordered; it reads SHSRKSLCRSREEPPPGDQSAPLASATPILG. Arginine 390 is modified (asymmetric dimethylarginine; alternate). Position 390 is an omega-N-methylarginine; alternate (arginine 390).

This sequence belongs to the sirtuin family. Class IV subfamily. In terms of assembly, interacts with UBTF and the RNA polymerase I complex. Interacts with components of the B-WICH complex, such as MYBBP1A, SMARCA5/SNF2H and BAZ1B/WSTF. Interacts with ELK4, leading to stabilization at target promoters for H3K18Ac deacetylation. Interacts with histone H2A and/or histone H2B. Interacts with DNMT1. Interacts with SIRT1. Requires Zn(2+) as cofactor. Post-translationally, phosphorylated during mitosis. Methylation at Arg-390 by PRMT6 inhibits the H3K18Ac histone deacetylase activity, promoting mitochondria biogenesis and maintaining mitochondria respiration. In terms of processing, ubiquitinated via 'Lys-63'-linked ubiquitin chains. Deubiquitinated by USP7, inhibiting the H3K18Ac histone deacetylase activity and regulating gluconeogenesis. Ubiquitinated by E3 ubiquitin-protein ligase complex containing FBXO7; leading to proteasomal degradation.

It is found in the nucleus. Its subcellular location is the nucleolus. It localises to the nucleoplasm. The protein resides in the chromosome. The protein localises to the cytoplasm. The catalysed reaction is N(6)-acetyl-L-lysyl-[protein] + NAD(+) + H2O = 2''-O-acetyl-ADP-D-ribose + nicotinamide + L-lysyl-[protein]. It carries out the reaction N(6)-glutaryl-L-lysyl-[protein] + NAD(+) + H2O = 2''-O-glutaryl-ADP-D-ribose + nicotinamide + L-lysyl-[protein]. The enzyme catalyses N(6)-succinyl-L-lysyl-[protein] + NAD(+) + H2O = 2''-O-succinyl-ADP-D-ribose + nicotinamide + L-lysyl-[protein]. It catalyses the reaction N(6)-propanoyl-L-lysyl-[protein] + NAD(+) + H2O = 3''-O-propanoyl-ADP-D-ribose + nicotinamide + L-lysyl-[protein]. The catalysed reaction is N(6)-decanoyl-L-lysyl-[protein] + NAD(+) + H2O = 2''-O-decanoyl-ADP-D-ribose + nicotinamide + L-lysyl-[protein]. NAD-dependent protein-lysine deacetylase and deacylase activities are activated by nucleic acids. Histone deacetylase activity is activated by DNA. Protein-lysine deacylase activity is activated by RNA. H3K18Ac histone deacetylase activity is inhibited by methylation at Arg-390. H3K18Ac histone deacetylase activity is inhibited by deubiquitination by USP7. In terms of biological role, NAD-dependent protein-lysine deacylase that can act both as a deacetylase or deacylase (desuccinylase, depropionylase, deglutarylase and dedecanoylase), depending on the context. Specifically mediates deacetylation of histone H3 at 'Lys-18' (H3K18Ac). In contrast to other histone deacetylases, displays strong preference for a specific histone mark, H3K18Ac, directly linked to control of gene expression. H3K18Ac is mainly present around the transcription start site of genes and has been linked to activation of nuclear hormone receptors; SIRT7 thereby acts as a transcription repressor. Moreover, H3K18 hypoacetylation has been reported as a marker of malignancy in various cancers and seems to maintain the transformed phenotype of cancer cells. Also able to mediate deacetylation of histone H3 at 'Lys-36' (H3K36Ac) in the context of nucleosomes. Also mediates deacetylation of non-histone proteins, such as ATM, CDK9, DDX21, DDB1, FBL, FKBP5/FKBP51, GABPB1, RAN, RRP9/U3-55K and POLR1E/PAF53. Enriched in nucleolus where it stimulates transcription activity of the RNA polymerase I complex. Acts by mediating the deacetylation of the RNA polymerase I subunit POLR1E/PAF53, thereby promoting the association of RNA polymerase I with the rDNA promoter region and coding region. In response to metabolic stress, SIRT7 is released from nucleoli leading to hyperacetylation of POLR1E/PAF53 and decreased RNA polymerase I transcription. Required to restore the transcription of ribosomal RNA (rRNA) at the exit from mitosis. Promotes pre-ribosomal RNA (pre-rRNA) cleavage at the 5'-terminal processing site by mediating deacetylation of RRP9/U3-55K, a core subunit of the U3 snoRNP complex. Mediates 'Lys-37' deacetylation of Ran, thereby regulating the nuclear export of NF-kappa-B subunit RELA/p65. Acts as a regulator of DNA damage repair by mediating deacetylation of ATM during the late stages of DNA damage response, promoting ATM dephosphorylation and deactivation. Suppresses the activity of the DCX (DDB1-CUL4-X-box) E3 ubiquitin-protein ligase complexes by mediating deacetylation of DDB1, which prevents the interaction between DDB1 and CUL4 (CUL4A or CUL4B). Activates RNA polymerase II transcription by mediating deacetylation of CDK9, thereby promoting 'Ser-2' phosphorylation of the C-terminal domain (CTD) of RNA polymerase II. Deacetylates FBL, promoting histone-glutamine methyltransferase activity of FBL. Acts as a regulator of mitochondrial function by catalyzing deacetylation of GABPB1. Regulates Akt/AKT1 activity by mediating deacetylation of FKBP5/FKBP51. Required to prevent R-loop-associated DNA damage and transcription-associated genomic instability by mediating deacetylation and subsequent activation of DDX21, thereby overcoming R-loop-mediated stalling of RNA polymerases. In addition to protein deacetylase activity, also acts as a protein-lysine deacylase. Acts as a protein depropionylase by mediating depropionylation of Osterix (SP7), thereby regulating bone formation by osteoblasts. Acts as a histone deglutarylase by mediating deglutarylation of histone H4 on 'Lys-91' (H4K91glu); a mark that destabilizes nucleosomes by promoting dissociation of the H2A-H2B dimers from nucleosomes. Acts as a histone desuccinylase: in response to DNA damage, recruited to DNA double-strand breaks (DSBs) and catalyzes desuccinylation of histone H3 on 'Lys-122' (H3K122succ), thereby promoting chromatin condensation and DSB repair. Also promotes DSB repair by promoting H3K18Ac deacetylation, regulating non-homologous end joining (NHEJ). Along with its role in DNA repair, required for chromosome synapsis during prophase I of female meiosis by catalyzing H3K18Ac deacetylation. Involved in transcriptional repression of LINE-1 retrotransposon via H3K18Ac deacetylation, and promotes their association with the nuclear lamina. Required to stabilize ribosomal DNA (rDNA) heterochromatin and prevent cellular senescence induced by rDNA instability. Acts as a negative regulator of SIRT1 by preventing autodeacetylation of SIRT1, restricting SIRT1 deacetylase activity. The polypeptide is NAD-dependent protein deacetylase sirtuin-7 (Rattus norvegicus (Rat)).